The chain runs to 233 residues: Ribose-5-phosphate isomerase A (233 aa).

Substrate-binding positions include Ser-31 to Thr-34, Asp-87 to Asp-90, and Lys-100 to Gly-103. Glu-109 (proton acceptor) is an active-site residue. Lys-127 is a substrate binding site.

Belongs to the ribose 5-phosphate isomerase family. As to quaternary structure, homodimer.

The enzyme catalyses aldehydo-D-ribose 5-phosphate = D-ribulose 5-phosphate. The protein operates within carbohydrate degradation; pentose phosphate pathway; D-ribose 5-phosphate from D-ribulose 5-phosphate (non-oxidative stage): step 1/1. Its function is as follows. Catalyzes the reversible conversion of ribose-5-phosphate to ribulose 5-phosphate. The polypeptide is Ribose-5-phosphate isomerase A (Chlamydia felis (strain Fe/C-56) (Chlamydophila felis)).